A 243-amino-acid chain; its full sequence is MSKINDKLTEINTVEYEVASKHSQYLFYSRFGLLDTAAYFLFLLSFFVTAVMFLVGIFHTEQFTLNDQNQGISGFYLFWNVKKPADIFNANFVYSISSFGIAILALGLFSLFLMIFLGYRWAISLFIKSQITKWERVIFSTGFYFSVVAYCFWIALMLLFLVLSDQHFFPRTTTQLKSNPNLSLFFRISHKDNVFSSRLNQLGAFATALCITLVVYELPFLGLFAFNWNKQRAKAIFCRKRKQ.

4 consecutive transmembrane segments (helical) span residues 38 to 58 (AYFL…VGIF), 99 to 119 (FGIA…FLGY), 143 to 163 (FYFS…FLVL), and 204 to 224 (AFAT…LGLF).

The protein localises to the cell membrane. This is an uncharacterized protein from Mycoplasma pneumoniae (strain ATCC 29342 / M129 / Subtype 1) (Mycoplasmoides pneumoniae).